The sequence spans 345 residues: NADPH dehydrogenase (345 aa).

23-26 (SPMC) serves as a coordination point for FMN. Tyr-28 lines the substrate pocket. 2 residues coordinate FMN: Ala-60 and Gln-102. Residue 164 to 167 (HGAH) participates in substrate binding. FMN contacts are provided by residues Arg-215 and 307–308 (GR).

The protein belongs to the NADH:flavin oxidoreductase/NADH oxidase family. NamA subfamily. As to quaternary structure, homotetramer. FMN is required as a cofactor.

It catalyses the reaction A + NADPH + H(+) = AH2 + NADP(+). Functionally, catalyzes the reduction of the double bond of an array of alpha,beta-unsaturated aldehydes and ketones. It also reduces the nitro group of nitroester and nitroaromatic compounds. It could have a role in detoxification processes. This chain is NADPH dehydrogenase, found in Bacillus cereus (strain ATCC 14579 / DSM 31 / CCUG 7414 / JCM 2152 / NBRC 15305 / NCIMB 9373 / NCTC 2599 / NRRL B-3711).